The chain runs to 345 residues: L-rhamnose-proton symporter (345 aa).

The next 10 membrane-spanning stretches (helical) occupy residues 4-24, 38-58, 68-88, 101-121, 131-151, 175-195, 214-234, 259-279, 290-310, and 323-343; these read AITM…CFYA, WSVG…ALLL, FSAA…IGNI, MGIG…TPLL, TAGG…VAIV, LVLA…MDAA, LPSY…FCFI, VLLS…YAWG, ISWM…GLLL, and VLSL…LGMA.

This sequence belongs to the L-rhamnose transporter (TC 2.A.7.6) family.

Its subcellular location is the cell inner membrane. It catalyses the reaction L-rhamnopyranose(in) + H(+)(in) = L-rhamnopyranose(out) + H(+)(out). In terms of biological role, uptake of L-rhamnose across the cytoplasmic membrane with the concomitant transport of protons into the cell (symport system). This Cronobacter sakazakii (strain ATCC BAA-894) (Enterobacter sakazakii) protein is L-rhamnose-proton symporter.